The chain runs to 638 residues: Intron-encoded RNA maturase bI4 (638 aa).

The segment at 1–253 is COB exons 1 to 4 encoded; sequence MAFRKSNVYL…VFYSPNTLGQ (253 aa). Positions 253 to 638 are COB intron 4 encoded; the sequence is QNMALLLITY…LKFNEKWNNN (386 aa).

It in the C-terminal section; belongs to the LAGLIDADG endonuclease family. In terms of assembly, forms a ternary complex with intron derived RNA and the imported mitochondrial leucyl-tRNA synthetase NAM2. The proteins do not interact directly with each other. In terms of processing, the mature protein may arise from proteolytic cleavage of an in-frame translation of COB exons 1 to 4 plus intron 4, containing the bI4 open reading frame. Cleavage would take place close to the Met-385 resulting in an active maturase of about 30 kDa.

Its subcellular location is the mitochondrion. Functionally, mitochondrial mRNA maturase required for splicing of intron 4 of the cytochrome b (COB) gene, containing its own coding sequence, and intron 4 in COX1, coding for the related homing endonuclease aI4. In vivo splicing requires in addition the imported mitochondrial leucyl-tRNA synthetase NAM2. Both proteins seem to stimulate the intrinsic ribozyme activity of intron bI4 through binding to and stabilizing specific secondary and tertiary structure elements in the RNA. This is Intron-encoded RNA maturase bI4 (BI4) from Saccharomyces cerevisiae (strain ATCC 204508 / S288c) (Baker's yeast).